A 342-amino-acid chain; its full sequence is S-adenosyl-L-methionine-dependent tRNA 4-demethylwyosine synthase (342 aa).

Residues Cys45, Cys58, and Cys71 each contribute to the [2Fe-2S] cluster site. The Radical SAM core domain occupies 64–312; the sequence is YGIHSHRCLQ…VKHLPGYHIE (249 aa). The [4Fe-4S] cluster site is built by Cys81, Cys85, and Cys88.

The protein belongs to the TYW1 family. As to quaternary structure, monomer. [2Fe-2S] cluster is required as a cofactor. [4Fe-4S] cluster serves as cofactor.

It localises to the cytoplasm. It catalyses the reaction N(1)-methylguanosine(37) in tRNA(Phe) + pyruvate + S-adenosyl-L-methionine = 4-demethylwyosine(37) in tRNA(Phe) + 5'-deoxyadenosine + L-methionine + CO2 + H2O. Functionally, component of the wyosine derivatives biosynthesis pathway that catalyzes the condensation of N-methylguanine with 2 carbon atoms from pyruvate to form the tricyclic 4-demethylwyosine (imG-14) on guanosine-37 of tRNA(Phe). This is S-adenosyl-L-methionine-dependent tRNA 4-demethylwyosine synthase from Pyrococcus horikoshii (strain ATCC 700860 / DSM 12428 / JCM 9974 / NBRC 100139 / OT-3).